The sequence spans 155 residues: Ribosomal RNA large subunit methyltransferase H (155 aa).

S-adenosyl-L-methionine contacts are provided by residues leucine 72, glycine 103, and 122-127 (LSDLTL).

This sequence belongs to the RNA methyltransferase RlmH family. Homodimer.

It localises to the cytoplasm. It carries out the reaction pseudouridine(1915) in 23S rRNA + S-adenosyl-L-methionine = N(3)-methylpseudouridine(1915) in 23S rRNA + S-adenosyl-L-homocysteine + H(+). Functionally, specifically methylates the pseudouridine at position 1915 (m3Psi1915) in 23S rRNA. This chain is Ribosomal RNA large subunit methyltransferase H, found in Paracidovorax citrulli (strain AAC00-1) (Acidovorax citrulli).